Consider the following 542-residue polypeptide: Putative DEAD-box ATP-dependent RNA helicase 43 (542 aa).

The Q motif motif lies at 97-125; it reads KNFMDMKFPSPLLRMLKDKGIMHPTPIQV. Residues 128 to 312 form the Helicase ATP-binding domain; sequence LPVVLSGRDM…TSALVKPVTV (185 aa). 141 to 148 serves as a coordination point for ATP; the sequence is AFTGSGKT. The short motif at 260–263 is the DEAD box element; sequence DEAD. In terms of domain architecture, Helicase C-terminal spans 323 to 483; sequence DVIQEVEYVK…RIPPVLAELN (161 aa). The segment at 499 to 516 adopts a CCHC-type zinc-finger fold; that stretch reads KGCAYCGGLGHRILQCPK.

It belongs to the DEAD box helicase family. DDX41 subfamily.

The catalysed reaction is ATP + H2O = ADP + phosphate + H(+). This Arabidopsis thaliana (Mouse-ear cress) protein is Putative DEAD-box ATP-dependent RNA helicase 43 (RH43).